The sequence spans 930 residues: Isoleucine--tRNA ligase (930 aa).

A 'HIGH' region motif is present at residues 57-67; it reads PYANGNIHVGH. Glu554 contributes to the L-isoleucyl-5'-AMP binding site. A 'KMSKS' region motif is present at residues 595-599; sequence KMSKS. Position 598 (Lys598) interacts with ATP. Zn(2+) contacts are provided by Cys888, Cys891, Cys908, and Cys911.

The protein belongs to the class-I aminoacyl-tRNA synthetase family. IleS type 1 subfamily. As to quaternary structure, monomer. Zn(2+) is required as a cofactor.

The protein resides in the cytoplasm. It catalyses the reaction tRNA(Ile) + L-isoleucine + ATP = L-isoleucyl-tRNA(Ile) + AMP + diphosphate. Its function is as follows. Catalyzes the attachment of isoleucine to tRNA(Ile). As IleRS can inadvertently accommodate and process structurally similar amino acids such as valine, to avoid such errors it has two additional distinct tRNA(Ile)-dependent editing activities. One activity is designated as 'pretransfer' editing and involves the hydrolysis of activated Val-AMP. The other activity is designated 'posttransfer' editing and involves deacylation of mischarged Val-tRNA(Ile). The sequence is that of Isoleucine--tRNA ligase from Streptococcus pneumoniae serotype 4 (strain ATCC BAA-334 / TIGR4).